A 253-amino-acid polypeptide reads, in one-letter code: Vitamin B12 import ATP-binding protein BtuD (253 aa).

One can recognise an ABC transporter domain in the interval 1 to 236 (MTNQLMALNQ…NTLSRVFAAD (236 aa)). 34 to 41 (GPNGSGKS) contacts ATP.

Belongs to the ABC transporter superfamily. Vitamin B12 importer (TC 3.A.1.13.1) family. The complex is composed of two ATP-binding proteins (BtuD), two transmembrane proteins (BtuC) and a solute-binding protein (BtuF).

It is found in the cell inner membrane. The catalysed reaction is an R-cob(III)alamin(out) + ATP + H2O = an R-cob(III)alamin(in) + ADP + phosphate + H(+). Part of the ABC transporter complex BtuCDF involved in vitamin B12 import. Responsible for energy coupling to the transport system. The polypeptide is Vitamin B12 import ATP-binding protein BtuD (Photorhabdus laumondii subsp. laumondii (strain DSM 15139 / CIP 105565 / TT01) (Photorhabdus luminescens subsp. laumondii)).